The chain runs to 344 residues: Holliday junction branch migration complex subunit RuvB (344 aa).

A large ATPase domain (RuvB-L) region spans residues 1 to 185 (MTERSDRDVS…FGFTAHMDFY (185 aa)). Residues Leu-24, Arg-25, Gly-66, Lys-69, Thr-70, Ser-71, 132–134 (EDF), Arg-175, Tyr-185, and Arg-222 contribute to the ATP site. Residue Thr-70 coordinates Mg(2+). The segment at 186 to 256 (EPAELERVLA…VAKAALEVYD (71 aa)) is small ATPAse domain (RuvB-S). The head domain (RuvB-H) stretch occupies residues 259-344 (ELGLDRLDRA…VGASQPGLFE (86 aa)). Residues Arg-314 and Arg-319 each coordinate DNA.

This sequence belongs to the RuvB family. As to quaternary structure, homohexamer. Forms an RuvA(8)-RuvB(12)-Holliday junction (HJ) complex. HJ DNA is sandwiched between 2 RuvA tetramers; dsDNA enters through RuvA and exits via RuvB. An RuvB hexamer assembles on each DNA strand where it exits the tetramer. Each RuvB hexamer is contacted by two RuvA subunits (via domain III) on 2 adjacent RuvB subunits; this complex drives branch migration. In the full resolvosome a probable DNA-RuvA(4)-RuvB(12)-RuvC(2) complex forms which resolves the HJ.

It localises to the cytoplasm. It catalyses the reaction ATP + H2O = ADP + phosphate + H(+). The RuvA-RuvB-RuvC complex processes Holliday junction (HJ) DNA during genetic recombination and DNA repair, while the RuvA-RuvB complex plays an important role in the rescue of blocked DNA replication forks via replication fork reversal (RFR). RuvA specifically binds to HJ cruciform DNA, conferring on it an open structure. The RuvB hexamer acts as an ATP-dependent pump, pulling dsDNA into and through the RuvAB complex. RuvB forms 2 homohexamers on either side of HJ DNA bound by 1 or 2 RuvA tetramers; 4 subunits per hexamer contact DNA at a time. Coordinated motions by a converter formed by DNA-disengaged RuvB subunits stimulates ATP hydrolysis and nucleotide exchange. Immobilization of the converter enables RuvB to convert the ATP-contained energy into a lever motion, pulling 2 nucleotides of DNA out of the RuvA tetramer per ATP hydrolyzed, thus driving DNA branch migration. The RuvB motors rotate together with the DNA substrate, which together with the progressing nucleotide cycle form the mechanistic basis for DNA recombination by continuous HJ branch migration. Branch migration allows RuvC to scan DNA until it finds its consensus sequence, where it cleaves and resolves cruciform DNA. This is Holliday junction branch migration complex subunit RuvB from Mycobacterium tuberculosis (strain ATCC 25177 / H37Ra).